The primary structure comprises 382 residues: Galactokinase (382 aa).

34-37 (EHTD) serves as a coordination point for substrate. ATP is bound at residue 124-130 (GAGLSSS). Mg(2+) contacts are provided by S130 and E162. The active-site Proton acceptor is D174. Y223 contributes to the substrate binding site.

Belongs to the GHMP kinase family. GalK subfamily.

The protein resides in the cytoplasm. The catalysed reaction is alpha-D-galactose + ATP = alpha-D-galactose 1-phosphate + ADP + H(+). Its pathway is carbohydrate metabolism; galactose metabolism. In terms of biological role, catalyzes the transfer of the gamma-phosphate of ATP to D-galactose to form alpha-D-galactose-1-phosphate (Gal-1-P). This is Galactokinase from Cronobacter sakazakii (strain ATCC BAA-894) (Enterobacter sakazakii).